The following is a 650-amino-acid chain: Chaperone protein DnaK (650 aa).

Threonine 200 carries the phosphothreonine; by autocatalysis modification. Residues 611-634 show a composition bias toward low complexity; sequence AQQAGAAGAAGAAAEGASAQGGAQ. The tract at residues 611–650 is disordered; that stretch reads AQQAGAAGAAGAAAEGASAQGGAQPPDDVVDADFKEVKKD.

It belongs to the heat shock protein 70 family.

Functionally, acts as a chaperone. The protein is Chaperone protein DnaK of Burkholderia pseudomallei (strain 1710b).